Here is a 73-residue protein sequence, read N- to C-terminus: Large ribosomal subunit protein bL31 (73 aa).

The Zn(2+) site is built by cysteine 16, cysteine 18, cysteine 38, and cysteine 41.

It belongs to the bacterial ribosomal protein bL31 family. Type A subfamily. In terms of assembly, part of the 50S ribosomal subunit. Zn(2+) is required as a cofactor.

Functionally, binds the 23S rRNA. This is Large ribosomal subunit protein bL31 from Vibrio vulnificus (strain YJ016).